The following is a 339-amino-acid chain: Dihydroorotate dehydrogenase (quinone) (339 aa).

FMN contacts are provided by residues 64–68 and Thr88; that span reads AGADK. Lys68 provides a ligand contact to substrate. Substrate is bound at residue 113–117; the sequence is NRNGF. The FMN site is built by Asn141 and Asn174. A substrate-binding site is contributed by Asn174. The active-site Nucleophile is the Ser177. Substrate is bound at residue Asn179. Residues Lys219 and Thr247 each coordinate FMN. 248-249 is a substrate binding site; sequence NT. Residues Gly270, Gly299, and 320-321 contribute to the FMN site; that span reads YS.

Belongs to the dihydroorotate dehydrogenase family. Type 2 subfamily. In terms of assembly, monomer. FMN is required as a cofactor.

Its subcellular location is the cell membrane. The enzyme catalyses (S)-dihydroorotate + a quinone = orotate + a quinol. Its pathway is pyrimidine metabolism; UMP biosynthesis via de novo pathway; orotate from (S)-dihydroorotate (quinone route): step 1/1. Functionally, catalyzes the conversion of dihydroorotate to orotate with quinone as electron acceptor. The sequence is that of Dihydroorotate dehydrogenase (quinone) from Haemophilus influenzae (strain PittEE).